The primary structure comprises 99 residues: Large ribosomal subunit protein eL21 (99 aa).

It belongs to the eukaryotic ribosomal protein eL21 family.

The polypeptide is Large ribosomal subunit protein eL21 (Methanocella arvoryzae (strain DSM 22066 / NBRC 105507 / MRE50)).